Here is a 465-residue protein sequence, read N- to C-terminus: U4/U6 small nuclear ribonucleoprotein PRP4 (465 aa).

7 WD repeats span residues 173–212 (VSTK…PLTQ), 216–256 (SHVG…GGLR), 263–302 (GHER…ELLL), 305–344 (GHDK…KVMT), 347–386 (GHSK…EGQL), 391–432 (AHRN…KMGS), and 435–464 (GHTD…IKLW).

In terms of assembly, component of the U4/U6-U5 tri-snRNP complex composed of the U4, U6 and U5 snRNAs and at least PRP3, PRP4, PRP6, PRP8, PRP18, PRP31, PRP38, SNU13, SNU23, SNU66, SNU114, SPP381, SMB1, SMD1, SMD2, SMD3, SMX2, SMX3, LSM2, LSM3, LSM4, LSM5, LSM6, LSM7, LSM8, BRR2 and DIB1.

The protein localises to the nucleus. Its function is as follows. Involved in RNA splicing. Is required for the association of U4/U6 snRNP with U5 snRNP in an early step of spliceosome assembly. The sequence is that of U4/U6 small nuclear ribonucleoprotein PRP4 (PRP4) from Saccharomyces cerevisiae (strain ATCC 204508 / S288c) (Baker's yeast).